We begin with the raw amino-acid sequence, 352 residues long: Replication-associated protein (352 aa).

The 109-residue stretch at 9 to 117 (QINAKNYFLT…DGDTLVWGEF (109 aa)) folds into the CRESS-DNA virus Rep endonuclease domain. The short motif at 16 to 19 (FLTY) is the RCR-1 element. The a divalent metal cation site is built by Glu50, His58, and His60. Positions 58-60 (HLH) match the RCR-2 motif. The active-site For DNA cleavage activity is Tyr104. Positions 104 to 107 (YIDK) match the RCR-3 motif. An a divalent metal cation-binding site is contributed by Asp108. The tract at residues 144 to 154 (KEEALQIIREK) is binding to RBR1. The segment at 157 to 177 (EKYLFQFHNLNSNLDRIFDKT) is oligomerization. An ATP-binding site is contributed by 223-230 (GDSRTGKT).

This sequence belongs to the geminiviridae Rep protein family. As to quaternary structure, homooligomer. Interacts with the replication enhancer protein (REn). Interacts with host retinoblastoma-related protein 1 (RBR1), and may thereby induce the transcription of host replicative enzymes even if the cell is not dividing anymore. Interacts with host PCNA. Interacts with host SCE1 protein. Interacts with host GRIK1, GRIK2, GRIMP and histone H3. Requires Mg(2+) as cofactor. Mn(2+) is required as a cofactor.

Its subcellular location is the host nucleus. Essential for the replication of viral ssDNA. The closed circular ssDNA genome is first converted to a superhelical dsDNA. Rep binds a specific region at the genome origin of replication. It introduces an endonucleolytic nick within the conserved sequence 5'-TAATATTAC-3' in the intergenic region of the genome present in all geminiviruses, thereby initiating the rolling circle replication (RCR). Following cleavage, binds covalently to the 5'-phosphate of DNA as a tyrosyl ester. The cleavage gives rise to a free 3'-OH that serves as a primer for the cellular DNA polymerase. The polymerase synthesizes the (+) strand DNA by rolling circle mechanism. After one round of replication, a Rep-catalyzed nucleotidyl transfer reaction releases a circular single-stranded virus genome, thereby terminating the replication. Displays origin-specific DNA cleavage, nucleotidyl transferase, ATPase and helicase activities. The polypeptide is Replication-associated protein (Solanum lycopersicum (Tomato)).